The primary structure comprises 49 residues: Small integral membrane protein 27 (49 aa).

The helical transmembrane segment at 11–31 (WTYSLLLLAIVLLSWGFVIYA) threads the bilayer.

It is found in the membrane. The chain is Small integral membrane protein 27 from Mus musculus (Mouse).